The following is an 86-amino-acid chain: uncharacterized protein (86 aa).

Residues 1 to 21 form a disordered region; sequence MLSNSTSRNRHSKHNKKNTRE. Over residues 8-17 the composition is skewed to basic residues; sequence RNRHSKHNKK.

This is an uncharacterized protein from Acidianus convivator (ATV).